A 243-amino-acid chain; its full sequence is DNA repair protein RecO (243 aa).

Belongs to the RecO family.

Functionally, involved in DNA repair and RecF pathway recombination. This Serratia proteamaculans (strain 568) protein is DNA repair protein RecO.